The sequence spans 417 residues: MFSRDVRLETYDPELAKAIAAEAGRQEDHVELIASENYCSPLVMEAQGSQLTNKYAEGYPGKRYYGGCEFVDIAEQLAIDRIKQVFGADYANVQPHSGSQANQAVYLALLQPGDTILGMSLAHGGHLTHGAKVNASGKLFNAVQYGVNEQGLIDYDEVQRLATEHKPKMVIAGFSAYSQKIDWARFRAIADSVGAYLFVDMAHVAGLVAAGVYPSPMDHAHVVTSTTHKTLRGPRGGIILAKGAGEDLVKKLQSIVFPGIQGGPLMHVIAAKAVAFKEALEPEFKTYQQQVVKNAQAMANTLIARGYKIVSGGTENHLMLVDMIGRDVSGKDAEAALGKAHITVNKNSVPNDPRSPFVTSGLRLGTPAITTRGYQEQDCVDLANWIADVLDAPADDAVLAKVRDAVTAQCKKYPVYG.

(6S)-5,6,7,8-tetrahydrofolate-binding positions include leucine 121 and glycine 125–leucine 127. Lysine 229 carries the post-translational modification N6-(pyridoxal phosphate)lysine. Serine 355–phenylalanine 357 contributes to the (6S)-5,6,7,8-tetrahydrofolate binding site.

It belongs to the SHMT family. Homodimer. Pyridoxal 5'-phosphate serves as cofactor.

The protein resides in the cytoplasm. It carries out the reaction (6R)-5,10-methylene-5,6,7,8-tetrahydrofolate + glycine + H2O = (6S)-5,6,7,8-tetrahydrofolate + L-serine. The protein operates within one-carbon metabolism; tetrahydrofolate interconversion. It functions in the pathway amino-acid biosynthesis; glycine biosynthesis; glycine from L-serine: step 1/1. Catalyzes the reversible interconversion of serine and glycine with tetrahydrofolate (THF) serving as the one-carbon carrier. This reaction serves as the major source of one-carbon groups required for the biosynthesis of purines, thymidylate, methionine, and other important biomolecules. Also exhibits THF-independent aldolase activity toward beta-hydroxyamino acids, producing glycine and aldehydes, via a retro-aldol mechanism. The chain is Serine hydroxymethyltransferase from Xanthomonas campestris pv. campestris (strain 8004).